A 594-amino-acid polypeptide reads, in one-letter code: ATP-dependent RNA helicase DBP9 (594 aa).

The Q motif motif lies at 17 to 45; sequence TTFEAFHLDSRLLQAIKNIGFQYPTLIQS. The 185-residue stretch at 49-233 folds into the Helicase ATP-binding domain; the sequence is PLALQQKRDI…QKFCRSPAIL (185 aa). 62 to 69 contributes to the ATP binding site; sequence AATGSGKT. Residues 179–182 carry the DEAD box motif; the sequence is DEVD. The 231-residue stretch at 246–476 folds into the Helicase C-terminal domain; it reads KLLQYYVKVS…PYKFDQKQVE (231 aa). Disordered stretches follow at residues 339–377 and 558–594; these read EDDEIEEGHNTENQEEKSLEGEPENDKKPSKKKKVQVKK and TKVKFVPFHNAKKRHSHKKGRVSKPKNGKVDPLKNFK. Residues 345-366 show a composition bias toward basic and acidic residues; it reads EGHNTENQEEKSLEGEPENDKK. A compositionally biased stretch (basic residues) spans 567–584; sequence NAKKRHSHKKGRVSKPKN. The segment covering 585–594 has biased composition (basic and acidic residues); that stretch reads GKVDPLKNFK.

It belongs to the DEAD box helicase family. DDX56/DBP9 subfamily. In terms of assembly, interacts with DBP6.

The protein localises to the nucleus. It is found in the nucleolus. The enzyme catalyses ATP + H2O = ADP + phosphate + H(+). Its function is as follows. ATP-binding RNA helicase involved in the biogenesis of 60S ribosomal subunits and is required for the normal formation of 25S and 5.8S rRNAs. This chain is ATP-dependent RNA helicase DBP9 (DBP9), found in Saccharomyces cerevisiae (strain YJM789) (Baker's yeast).